Reading from the N-terminus, the 667-residue chain is Chaperone protein DnaK (667 aa).

Position 196 is a phosphothreonine; by autocatalysis (T196). Disordered regions lie at residues 495 to 525 (EANS…RKER) and 595 to 667 (AGEE…GDDE). Positions 506-525 (EKMKEEAEQHAEEDERRKER) are enriched in basic and acidic residues. Residues 595–612 (AGEEIREAQQQQAQQGAA) show a composition bias toward low complexity. Positions 630-641 (GPAGGPTGGPAS) are enriched in gly residues. A compositionally biased stretch (acidic residues) spans 647-667 (DSDEEDVQDADYEVVDEGDDE).

The protein belongs to the heat shock protein 70 family.

Functionally, acts as a chaperone. This Salinibacter ruber (strain DSM 13855 / M31) protein is Chaperone protein DnaK.